The chain runs to 413 residues: Alpha-ketoglutarate-dependent xanthine dioxygenase xan1 (413 aa).

Low complexity predominate over residues 1–18; sequence MSATATTTVVEPPTTTLT. The interval 1-24 is disordered; sequence MSATATTTVVEPPTTTLTGATEPP. H183 and D185 together coordinate Fe cation. 2-oxoglutarate-binding residues include T228 and W362. H377 provides a ligand contact to Fe cation. A 2-oxoglutarate-binding site is contributed by R389.

It belongs to the TfdA dioxygenase family. Fe(2+) serves as cofactor.

It is found in the cytoplasm. Its subcellular location is the cytosol. It carries out the reaction xanthine + 2-oxoglutarate + O2 = urate + succinate + CO2. Its function is as follows. Alpha-ketoglutarate-dependent xanthine dioxygenase is a non-heme mononuclear Fe(2+) enzyme that decarboxylates alpha-ketoglutarate to succinate and CO(2) while hydroxylating xanthine to generate uric acid. Allows xanthine utilization as a nitrogen source. The chain is Alpha-ketoglutarate-dependent xanthine dioxygenase xan1 (xan1) from Schizosaccharomyces pombe (strain 972 / ATCC 24843) (Fission yeast).